A 176-amino-acid chain; its full sequence is Protein GrpE (176 aa).

It belongs to the GrpE family. Homodimer.

It localises to the cytoplasm. In terms of biological role, participates actively in the response to hyperosmotic and heat shock by preventing the aggregation of stress-denatured proteins, in association with DnaK and GrpE. It is the nucleotide exchange factor for DnaK and may function as a thermosensor. Unfolded proteins bind initially to DnaJ; upon interaction with the DnaJ-bound protein, DnaK hydrolyzes its bound ATP, resulting in the formation of a stable complex. GrpE releases ADP from DnaK; ATP binding to DnaK triggers the release of the substrate protein, thus completing the reaction cycle. Several rounds of ATP-dependent interactions between DnaJ, DnaK and GrpE are required for fully efficient folding. This Thermoplasma volcanium (strain ATCC 51530 / DSM 4299 / JCM 9571 / NBRC 15438 / GSS1) protein is Protein GrpE.